We begin with the raw amino-acid sequence, 90 residues long: Small ribosomal subunit protein uS15c (90 aa).

Belongs to the universal ribosomal protein uS15 family. Part of the 30S ribosomal subunit.

The protein resides in the plastid. It localises to the chloroplast. This Dioscorea elephantipes (Elephant's foot yam) protein is Small ribosomal subunit protein uS15c (rps15).